The primary structure comprises 292 residues: 6-phospho-5-dehydro-2-deoxy-D-gluconate aldolase (292 aa).

Aspartate 85 serves as the catalytic Proton donor. The Zn(2+) site is built by histidine 86 and histidine 180. Residue glycine 181 participates in dihydroxyacetone phosphate binding. Residue histidine 208 coordinates Zn(2+). Dihydroxyacetone phosphate contacts are provided by residues glycine 209–serine 211 and asparagine 230–threonine 233. Phosphothreonine is present on threonine 233.

Belongs to the class II fructose-bisphosphate aldolase family. IolJ subfamily. It depends on Zn(2+) as a cofactor.

It catalyses the reaction 6-phospho-5-dehydro-2-deoxy-D-gluconate = 3-oxopropanoate + dihydroxyacetone phosphate. It functions in the pathway polyol metabolism; myo-inositol degradation into acetyl-CoA; acetyl-CoA from myo-inositol: step 6/7. In terms of biological role, produces dihydroxyacetone phosphate (DHAP or glycerone phosphate) and malonic semialdehyde (MSA or 3-oxopropanoate) from 6-phospho-5-dehydro-2-deoxy-D-gluconate (DKGP). The chain is 6-phospho-5-dehydro-2-deoxy-D-gluconate aldolase (iolJ) from Bacillus licheniformis (strain ATCC 14580 / DSM 13 / JCM 2505 / CCUG 7422 / NBRC 12200 / NCIMB 9375 / NCTC 10341 / NRRL NRS-1264 / Gibson 46).